The sequence spans 362 residues: S-adenosylmethionine decarboxylase proenzyme 2 (362 aa).

Catalysis depends on residues glutamate 9 and glutamate 12. Glutamate 68 lines the substrate pocket. The Schiff-base intermediate with substrate; via pyruvic acid role is filled by serine 69. Position 69 is a pyruvic acid (Ser); by autocatalysis (serine 69). Catalysis depends on cysteine 83, which acts as the Proton donor; for catalytic activity. Residues serine 232 and histidine 245 each act as proton acceptor; for processing activity in the active site. Glutamate 249 contacts substrate.

The protein belongs to the eukaryotic AdoMetDC family. Pyruvate serves as cofactor. Post-translationally, is synthesized initially as an inactive proenzyme. Formation of the active enzyme involves a self-maturation process in which the active site pyruvoyl group is generated from an internal serine residue via an autocatalytic post-translational modification. Two non-identical subunits are generated from the proenzyme in this reaction, and the pyruvate is formed at the N-terminus of the alpha chain, which is derived from the carboxyl end of the proenzyme. The post-translation cleavage follows an unusual pathway, termed non-hydrolytic serinolysis, in which the side chain hydroxyl group of the serine supplies its oxygen atom to form the C-terminus of the beta chain, while the remainder of the serine residue undergoes an oxidative deamination to produce ammonia and the pyruvoyl group blocking the N-terminus of the alpha chain.

The catalysed reaction is S-adenosyl-L-methionine + H(+) = S-adenosyl 3-(methylsulfanyl)propylamine + CO2. It functions in the pathway amine and polyamine biosynthesis; S-adenosylmethioninamine biosynthesis; S-adenosylmethioninamine from S-adenosyl-L-methionine: step 1/1. Its function is as follows. Essential for biosynthesis of the polyamines spermidine and spermine. Essential for polyamine homeostasis, and normal plant embryogenesis, growth and development. This chain is S-adenosylmethionine decarboxylase proenzyme 2, found in Arabidopsis thaliana (Mouse-ear cress).